The primary structure comprises 286 residues: Pantothenate synthetase (286 aa).

Position 30–37 (30–37 (MGNLHSGH)) interacts with ATP. The active-site Proton donor is His-37. Gln-61 contacts (R)-pantoate. Gln-61 provides a ligand contact to beta-alanine. 149–152 (GQKD) contacts ATP. Gln-155 is a binding site for (R)-pantoate. Residues Val-178 and 186-189 (LSSR) contribute to the ATP site.

The protein belongs to the pantothenate synthetase family. In terms of assembly, homodimer.

The protein localises to the cytoplasm. It catalyses the reaction (R)-pantoate + beta-alanine + ATP = (R)-pantothenate + AMP + diphosphate + H(+). The protein operates within cofactor biosynthesis; (R)-pantothenate biosynthesis; (R)-pantothenate from (R)-pantoate and beta-alanine: step 1/1. Its function is as follows. Catalyzes the condensation of pantoate with beta-alanine in an ATP-dependent reaction via a pantoyl-adenylate intermediate. The protein is Pantothenate synthetase of Pseudomonas fluorescens (strain Pf0-1).